The following is a 500-amino-acid chain: LEM protein 2 (500 aa).

The LEM domain occupies 1–45; it reads MVDVEKMSDAELRAELNVRGANVGPVTGTTRSLYEKKLKKLLSGG. Residues 1–325 are Nuclear-facing; the sequence is MVDVEKMSDA…VKQTNIFNEA (325 aa). The interval 39 to 202 is disordered; sequence KKLLSGGAKT…RRITSVPGLI (164 aa). Positions 46 to 57 are enriched in low complexity; the sequence is AKTPARPTVAKP. Residues 58 to 75 show a composition bias toward pro residues; the sequence is APKPTPKSAPAPKSPKSP. A compositionally biased stretch (low complexity) spans 77–89; the sequence is ARRSIPRAAATAA. A compositionally biased stretch (acidic residues) spans 103–122; it reads EEMSDSDDDMRDDDDDDEEI. 2 stretches are compositionally biased toward low complexity: residues 130-141 and 168-197; these read SSFRSANSTASS and NTPRTTSSSSKTTINTTTTRIPSTPRRITS. Residues 326–346 form a helical membrane-spanning segment; that stretch reads IYFALYVILILFVVLGIAYAL. Residues 347 to 378 are Perinuclear space-facing; the sequence is TTTHRPKTADFSGYWGVLKAAGRDSLNFFYNY. Residues 379–399 form a helical membrane-spanning segment; the sequence is AILPVVSLGIFVVLGAGIYFG. At 400-500 the chain is on the nuclear side; it reads HRKYKEAKEQ…WIGNQSQKRW (101 aa).

As to quaternary structure, interacts with lmn-1. Interacts (via LEM domain and the C-terminal nuclear domain) with baf-1. Ubiquitous. High expression in germline and intestine.

The protein localises to the nucleus inner membrane. It is found in the nucleus envelope. The protein resides in the chromosome. Functionally, nuclear lamina-associated inner nuclear membrane protein that is involved in cell division, nuclear structure organization, maintenance of nuclear envelope integrity and nuclear envelope reformation after mitosis. In interphase cells, plays a role in anchoring and spatial arrangement of chromosome arms at the nuclear periphery, forming so-called lem-2 subdomains. Both arms of autosomes but only the left arm of the X chromosome are anchored in lem-2 subdomains; sequences bound by lem-2 are mainly repetitive chromosome sequences and inactive genes. Involved in chromosome segregation and cell division, probably via its interaction with the nuclear intermediate filament protein lmn-1, the main component of nuclear lamina. Required to organize the distribution of lmn-1, nuclear pore complexes (NPCs) and chromatin in mitotically active cells. Involved in the nuclear positioning and efficient anchoring of microtubule-organizing centers (MTOCs) to the nuclear envelope during mitosis as well as on maintaining correct nuclear morphology. Contributes to closure of nuclear envelope (NE) holes and prevents excess nuclear membranes after meiosis and mitosis. Together with emr-1, plays a role in baf-1 enrichment at the nuclear envelope in anaphase. Together with emr-1, involved in muscle cell attachment to hypodermal cells, as well as muscle cell location and sarcomere organization. May play a role in radiation-induced DNA damage repair response. The polypeptide is LEM protein 2 (lem-2) (Caenorhabditis elegans).